The chain runs to 487 residues: MSYVIEGTTGAWELVIGLEVHAQVISRSKLFSGAATAFGAEPNSQVSFVDAGFPGMLPVINRECVAQAVRTGLGLAAHINLVSRFDRKNYFYADLPQGYQISQYEHPIVGAGAIEIELESGETRTIGITRLHLEQDAGKSMHDQHPSKSLIDLNRSGVALMEIVSEPDMRSPEEAGAYLRKLRTILRYLGTCDGNMDEGSMRADVNVSVRKHGEPFRTRCEIKNVNSIRFVMQAIEAEAKRQIEIWEAGGTVDQETRLFEPARGVTRSMRSKEDAHDYRYFPEPDLLPLVLEEEWVESLKATLPELPDAKRARLMRDFGLSRYEASIFVMEQVTADFFETVAAGRDAKLVANWMLGDFFAHLNRTGTSIETSPVTAARLGELLDLITDKTINGKIAKEVLELMFDTGDAAGAIVEARGLKQVTDTGAIDEAIDRVVAANADKLAEYKAGKDKLFGFFVGQVMKAMQGKGNPALVNEALKRKIGEPGA.

Belongs to the GatB/GatE family. GatB subfamily. As to quaternary structure, heterotrimer of A, B and C subunits.

The enzyme catalyses L-glutamyl-tRNA(Gln) + L-glutamine + ATP + H2O = L-glutaminyl-tRNA(Gln) + L-glutamate + ADP + phosphate + H(+). It catalyses the reaction L-aspartyl-tRNA(Asn) + L-glutamine + ATP + H2O = L-asparaginyl-tRNA(Asn) + L-glutamate + ADP + phosphate + 2 H(+). In terms of biological role, allows the formation of correctly charged Asn-tRNA(Asn) or Gln-tRNA(Gln) through the transamidation of misacylated Asp-tRNA(Asn) or Glu-tRNA(Gln) in organisms which lack either or both of asparaginyl-tRNA or glutaminyl-tRNA synthetases. The reaction takes place in the presence of glutamine and ATP through an activated phospho-Asp-tRNA(Asn) or phospho-Glu-tRNA(Gln). This is Aspartyl/glutamyl-tRNA(Asn/Gln) amidotransferase subunit B from Acidiphilium cryptum (strain JF-5).